We begin with the raw amino-acid sequence, 715 residues long: Methylmalonyl-CoA mutase large subunit (715 aa).

Tyr-70, Met-73, Arg-77, Thr-80, Arg-82, Tyr-84, and Ser-109 together coordinate (R)-methylmalonyl-CoA. The cob(II)alamin site is built by Phe-112 and Ala-134. Residues Thr-190 and Gln-192 each coordinate (R)-methylmalonyl-CoA. Residues Val-201 and Arg-202 each contribute to the cob(II)alamin site. 4 residues coordinate (R)-methylmalonyl-CoA: Arg-202, His-239, Arg-278, and Ser-280. Gly-328, Glu-365, Ala-368, Gly-599, His-600, Asp-601, Arg-602, Ser-645, Leu-647, Gly-676, and Thr-699 together coordinate cob(II)alamin. The B12-binding domain occupies 587–715; that stretch reads QPRIMIAKMG…AKVLEILLEE (129 aa).

This sequence belongs to the methylmalonyl-CoA mutase family. As to quaternary structure, heterodimer of an alpha and a beta chain. The cofactor is adenosylcob(III)alamin.

It carries out the reaction (R)-methylmalonyl-CoA = succinyl-CoA. Its function is as follows. Catalyzes the isomerization of succinyl-CoA to methylmalonyl-CoA during synthesis of propionate from tricarboxylic acid-cycle intermediates. In Porphyromonas gingivalis (strain ATCC BAA-308 / W83), this protein is Methylmalonyl-CoA mutase large subunit (mutB).